We begin with the raw amino-acid sequence, 162 residues long: 2-C-methyl-D-erythritol 2,4-cyclodiphosphate synthase (162 aa).

A divalent metal cation contacts are provided by Asp-8 and His-10. 4-CDP-2-C-methyl-D-erythritol 2-phosphate is bound by residues 8–10 and 34–35; these read DVH and HS. A divalent metal cation is bound at residue His-42. Residues 56-58, 61-65, 132-135, Phe-139, and Lys-142 each bind 4-CDP-2-C-methyl-D-erythritol 2-phosphate; these read DIG, FPDND, and TTTE.

This sequence belongs to the IspF family. In terms of assembly, homotrimer. A divalent metal cation serves as cofactor.

It carries out the reaction 4-CDP-2-C-methyl-D-erythritol 2-phosphate = 2-C-methyl-D-erythritol 2,4-cyclic diphosphate + CMP. It functions in the pathway isoprenoid biosynthesis; isopentenyl diphosphate biosynthesis via DXP pathway; isopentenyl diphosphate from 1-deoxy-D-xylulose 5-phosphate: step 4/6. Its function is as follows. Involved in the biosynthesis of isopentenyl diphosphate (IPP) and dimethylallyl diphosphate (DMAPP), two major building blocks of isoprenoid compounds. Catalyzes the conversion of 4-diphosphocytidyl-2-C-methyl-D-erythritol 2-phosphate (CDP-ME2P) to 2-C-methyl-D-erythritol 2,4-cyclodiphosphate (ME-CPP) with a corresponding release of cytidine 5-monophosphate (CMP). The chain is 2-C-methyl-D-erythritol 2,4-cyclodiphosphate synthase from Pelotomaculum thermopropionicum (strain DSM 13744 / JCM 10971 / SI).